A 406-amino-acid chain; its full sequence is Succinylornithine transaminase (406 aa).

Lys-252 is subject to N6-(pyridoxal phosphate)lysine.

Belongs to the class-III pyridoxal-phosphate-dependent aminotransferase family. AstC subfamily. It depends on pyridoxal 5'-phosphate as a cofactor.

The catalysed reaction is N(2)-succinyl-L-ornithine + 2-oxoglutarate = N-succinyl-L-glutamate 5-semialdehyde + L-glutamate. It participates in amino-acid degradation; L-arginine degradation via AST pathway; L-glutamate and succinate from L-arginine: step 3/5. In terms of biological role, catalyzes the transamination of N(2)-succinylornithine and alpha-ketoglutarate into N(2)-succinylglutamate semialdehyde and glutamate. Can also act as an acetylornithine aminotransferase. This is Succinylornithine transaminase from Escherichia coli O127:H6 (strain E2348/69 / EPEC).